A 505-amino-acid polypeptide reads, in one-letter code: Cytochrome P450 monooxygenase FGM1 (505 aa).

Residues 1–23 (MPLILSITSSGTVLVLLTLLSLA) form the signal peptide. Residues N188 and N351 are each glycosylated (N-linked (GlcNAc...) asparagine). Residue C450 participates in heme binding.

This sequence belongs to the cytochrome P450 family. Requires heme as cofactor.

It functions in the pathway secondary metabolite biosynthesis. Cytochrome P450 monooxygenase; part of the Fg3_54/C64 gene cluster that mediates the biosynthesis of the octapeptide fusaoctaxin A, a virulence factor that is required for cell-to-cell invasiveness of plant host. The 2 nonribosomal peptide synthetases NRPS9 and NRPS5 form an assembly line which likely utilizes GABA as a starter unit (loaded on the unique module M1 of NRPS9) and sequentially incorporates seven extender units composed of the residues L-Ala, L-allo-Ile, L-Ser, L-Val, L-Ser, L-Leu and L-Leu, respectively. During the process, each of the residues that are tethered on modules M3-M7 of NRPS5 containing an E domain can undergo an epimerization reaction to produce a D-configuration before the transpeptidation reaction occurs. The elongation of the peptidyl chain might be terminated by module M8-mediated L-Leu incorporation, followed by R domain-catalyzed 4 electron reduction to release the resulting octapeptide from the assembly line as an alcohol. Fusaoctaxin A is cleaved by the cluster specific ABC transporter FGM5 to the pentapeptide fusapentaxin A and the tripeptide fusatrixin A. The other enzymes from the cluster, FGM1, FGM2, FGM3 and FGM9 seem not to be involved in the biosynthesis of fusaoctaxin A and their functions have still to be determined. In Gibberella zeae (strain ATCC MYA-4620 / CBS 123657 / FGSC 9075 / NRRL 31084 / PH-1) (Wheat head blight fungus), this protein is Cytochrome P450 monooxygenase FGM1.